Reading from the N-terminus, the 278-residue chain is Serine protease 57 (278 aa).

An N-terminal signal peptide occupies residues 1–31 (MVPGTGGGRDCLTLVVATALTQLLWLPGCCG). Residues 34 to 263 (IVGGHEVKPH…FVSWIWDVVR (230 aa)) form the Peptidase S1 domain. Cysteines 59 and 75 form a disulfide. Active-site charge relay system residues include His74 and Asp122. Asn129 carries N-linked (GlcNAc...) asparagine glycosylation. Cystine bridges form between Cys157/Cys224, Cys188/Cys202, and Cys214/Cys239. The active-site Charge relay system is Ser218.

This sequence belongs to the peptidase S1 family. After cleavage of the signal peptide, the N-terminus is probably further processed by CTSC. Processing by CTSC is probably required for accumulation in cytoplasmic granules; in the absence of CTSC the protein does not accumulate. In terms of processing, N-glycosylated.

It is found in the cytoplasmic granule lumen. The protein resides in the secreted. Serine protease that cleaves preferentially after Arg residues. Can also cleave after citrulline (deimidated arginine) and methylarginine residues. This is Serine protease 57 (Prss57) from Rattus norvegicus (Rat).